Here is a 132-residue protein sequence, read N- to C-terminus: Fluoride-specific ion channel FluC (132 aa).

4 helical membrane passes run V6–V26, G41–I61, F73–Y93, and A104–W124. Residues G80 and T83 each coordinate Na(+).

This sequence belongs to the fluoride channel Fluc/FEX (TC 1.A.43) family.

The protein localises to the cell inner membrane. The enzyme catalyses fluoride(in) = fluoride(out). Its activity is regulated as follows. Na(+) is not transported, but it plays an essential structural role and its presence is essential for fluoride channel function. Fluoride-specific ion channel. Important for reducing fluoride concentration in the cell, thus reducing its toxicity. The chain is Fluoride-specific ion channel FluC from Hydrogenovibrio crunogenus (strain DSM 25203 / XCL-2) (Thiomicrospira crunogena).